The chain runs to 505 residues: Lysine--tRNA ligase (505 aa).

Residues E415 and E422 each contribute to the Mg(2+) site.

It belongs to the class-II aminoacyl-tRNA synthetase family. Homodimer. Requires Mg(2+) as cofactor.

It is found in the cytoplasm. The enzyme catalyses tRNA(Lys) + L-lysine + ATP = L-lysyl-tRNA(Lys) + AMP + diphosphate. The chain is Lysine--tRNA ligase from Xanthomonas oryzae pv. oryzae (strain MAFF 311018).